The primary structure comprises 75 residues: Peptide Ctri10033 (75 aa).

The signal sequence occupies residues M1–G22. At R43 the chain carries Arginine amide. The propeptide occupies E47–Y75.

The protein belongs to the non-disulfide-bridged peptide (NDBP) superfamily. Short antimicrobial peptide (group 4) family. In terms of tissue distribution, expressed by the venom gland.

It localises to the secreted. The sequence is that of Peptide Ctri10033 from Chaerilus tricostatus (Scorpion).